A 290-amino-acid chain; its full sequence is Protein SSO1 (290 aa).

The Cytoplasmic segment spans residues Met1–Arg265. The t-SNARE coiled-coil homology domain occupies Leu190–Ala252. The helical; Anchor for type IV membrane protein transmembrane segment at Cys266 to Val287 threads the bilayer. The Extracellular segment spans residues Lys288–Arg290.

It belongs to the syntaxin family.

It localises to the membrane. In terms of biological role, required for vesicle fusion with the plasma membrane. The protein is Protein SSO1 (SSO1) of Saccharomyces cerevisiae (strain ATCC 204508 / S288c) (Baker's yeast).